Here is a 420-residue protein sequence, read N- to C-terminus: D-tagatose-1,6-bisphosphate aldolase subunit GatZ (420 aa).

Belongs to the GatZ/KbaZ family. GatZ subfamily. As to quaternary structure, forms a complex with GatY.

It participates in carbohydrate metabolism; D-tagatose 6-phosphate degradation; D-glyceraldehyde 3-phosphate and glycerone phosphate from D-tagatose 6-phosphate: step 2/2. Component of the tagatose-1,6-bisphosphate aldolase GatYZ that is required for full activity and stability of the Y subunit. Could have a chaperone-like function for the proper and stable folding of GatY. When expressed alone, GatZ does not show any aldolase activity. Is involved in the catabolism of galactitol. The protein is D-tagatose-1,6-bisphosphate aldolase subunit GatZ of Escherichia coli O8 (strain IAI1).